Consider the following 478-residue polypeptide: Glutamine synthetase (478 aa).

Lys14 participates in a covalent cross-link: Isoglutamyl lysine isopeptide (Lys-Gln) (interchain with Q-Cter in protein Pup). The GS beta-grasp domain maps to 16–100; sequence ENVEYVDIRF…MNFFVHDPFT (85 aa). A GS catalytic domain is found at 108 to 478; the sequence is PRNVARKAEN…PYEFSLYYDV (371 aa). Glu133 and Glu135 together coordinate Mg(2+). Glu214 lines the ATP pocket. Mg(2+) is bound by residues Glu219 and Glu227. 230 to 232 is an ATP binding site; it reads YKF. L-glutamate contacts are provided by residues 271–272 and Gly272; that span reads NG. His276 contributes to the Mg(2+) binding site. ATP-binding positions include 278–280 and Ser280; that span reads HQS. The L-glutamate site is built by Arg329, Glu335, and Arg347. ATP-binding residues include Arg347, Arg352, and Lys361. Glu366 is a binding site for Mg(2+). Arg368 contributes to the L-glutamate binding site. Position 406 is an O-AMP-tyrosine (Tyr406).

The protein belongs to the glutamine synthetase family. Oligomer of 12 subunits arranged in the form of two hexagons. The cofactor is Mg(2+).

The protein resides in the cytoplasm. It carries out the reaction L-glutamate + NH4(+) + ATP = L-glutamine + ADP + phosphate + H(+). When cellular nitrogen levels are high, the C-terminal adenylyl transferase (AT) of GlnE inhibits GlnA by covalent transfer of an adenylyl group from ATP to Tyr-406. Conversely, when nitrogen levels are low, the N-terminal adenylyl removase (AR) of GlnE activates GlnA by removing the adenylyl group by phosphorolysis. The fully adenylated enzyme complex is inactive. Its function is as follows. Involved in nitrogen metabolism via ammonium assimilation. Catalyzes the ATP-dependent biosynthesis of glutamine from glutamate and ammonia. This chain is Glutamine synthetase, found in Mycolicibacterium smegmatis (strain ATCC 700084 / mc(2)155) (Mycobacterium smegmatis).